Reading from the N-terminus, the 612-residue chain is Alpha-glycerophosphate oxidase (612 aa).

Residue 21–49 coordinates FAD; sequence DLLIIGGGITGAGVALQAAASGLDTGLIE. Basic and acidic residues predominate over residues 399–408; the sequence is ETSTSEKELD. The tract at residues 399 to 418 is disordered; the sequence is ETSTSEKELDPSAVSRGSSF.

The protein belongs to the FAD-dependent glycerol-3-phosphate dehydrogenase family. FAD serves as cofactor.

It is found in the cytoplasm. The catalysed reaction is sn-glycerol 3-phosphate + O2 = dihydroxyacetone phosphate + H2O2. The protein is Alpha-glycerophosphate oxidase (glpO) of Streptococcus pyogenes serotype M1.